The primary structure comprises 148 residues: Phosphopantetheine adenylyltransferase (148 aa).

It belongs to the eukaryotic CoaD family.

Its subcellular location is the cytoplasm. The enzyme catalyses (R)-4'-phosphopantetheine + ATP + H(+) = 3'-dephospho-CoA + diphosphate. It participates in cofactor biosynthesis; coenzyme A biosynthesis. Its function is as follows. Reversibly transfers an adenylyl group from ATP to 4'-phosphopantetheine, yielding dephospho-CoA (dPCoA) and pyrophosphate. This chain is Phosphopantetheine adenylyltransferase, found in Archaeoglobus fulgidus (strain ATCC 49558 / DSM 4304 / JCM 9628 / NBRC 100126 / VC-16).